Reading from the N-terminus, the 394-residue chain is Bone morphogenetic protein 15 (394 aa).

The signal sequence occupies residues 1-18 (MVLLSILRILLLWGLVLF). Positions 19-269 (MEHRVQMTQV…DPSLLLRRAR (251 aa)) are excised as a propeptide. 2 N-linked (GlcNAc...) asparagine glycosylation sites follow: N87 and N238. Disulfide bonds link C293-C359, C322-C391, and C326-C393. Residue N375 is glycosylated (N-linked (GlcNAc...) asparagine).

The protein belongs to the TGF-beta family. Homodimer or heterodimer (Potential). But, in contrast to other members of this family, cannot be disulfide-linked.

It is found in the secreted. May be involved in follicular development. Seems to be an oocyte-specific growth/differentiation factor that stimulates folliculogenesis and granulosa cell (GC) growth. The polypeptide is Bone morphogenetic protein 15 (BMP15) (Bos taurus (Bovine)).